A 532-amino-acid polypeptide reads, in one-letter code: MGMFRVEYLLLGILVIGVRSRDIPNCDFFDTVQLRESEKLCNGSYRYEDVVIPAKLTGKYDYEIDYDGDRVSVPKHIRGCVCKLKTCIRFCCHHKKLMAGNLCSQDVYENLTYEYTLDITQLNGSVIKKHVLNDMVVQQDLPLPCERHYSLDAETSTYDMWSLYENGSLFRHFDQRYLSKQEFCLQPNPTSTGKNYSLIVAFNCIQKPSMKMAYGRFECVRKSRLSNASIPVKFSSVFFMVITIAAYLWLPKFRSLHGKCCNLYFICLAITFLLNVISLFGIFELKTPICYLTGYAGYFTVMATFLWLSVISFDVWRRFAMRKFQVFYKNKRSSFFNYNIIVWSSAGLLTCIIFLVDQFVETNLDNPYNPAVGVFSCWIFTNGWSATFYFYAPLAILIILNCASFFLTTRYIYVENKQNQKVLNNSEPQKLSRNHANYRIYFRLFIIMGGSWFLEIIAFICEMENMWKPLIILNDYINCSQGIIIFVATFCNHEMFRLIRKRIQNRNITSLELTNTSRPVESEKMADVELGK.

A signal peptide spans 1–20 (MGMFRVEYLLLGILVIGVRS). Topologically, residues 21–229 (RDIPNCDFFD…VRKSRLSNAS (209 aa)) are extracellular. 5 cysteine pairs are disulfide-bonded: Cys-26–Cys-80, Cys-82–Cys-87, Cys-91–Cys-184, Cys-92–Cys-103, and Cys-145–Cys-204. Residue Asn-42 is glycosylated (N-linked (GlcNAc...) asparagine). N-linked (GlcNAc...) asparagine glycosylation is found at Asn-110, Asn-123, Asn-166, Asn-195, and Asn-227. Residues 230 to 250 (IPVKFSSVFFMVITIAAYLWL) traverse the membrane as a helical segment. Residues 251–262 (PKFRSLHGKCCN) are Cytoplasmic-facing. Residues 263–283 (LYFICLAITFLLNVISLFGIF) traverse the membrane as a helical segment. Residues 284–290 (ELKTPIC) are Extracellular-facing. A helical transmembrane segment spans residues 291–311 (YLTGYAGYFTVMATFLWLSVI). Residues 312-339 (SFDVWRRFAMRKFQVFYKNKRSSFFNYN) lie on the Cytoplasmic side of the membrane. The chain crosses the membrane as a helical span at residues 340–360 (IIVWSSAGLLTCIIFLVDQFV). The Extracellular portion of the chain corresponds to 361–386 (ETNLDNPYNPAVGVFSCWIFTNGWSA). Residues 387–407 (TFYFYAPLAILIILNCASFFL) traverse the membrane as a helical segment. At 408-439 (TTRYIYVENKQNQKVLNNSEPQKLSRNHANYR) the chain is on the cytoplasmic side. The helical transmembrane segment at 440–460 (IYFRLFIIMGGSWFLEIIAFI) threads the bilayer. Residues 461–469 (CEMENMWKP) lie on the Extracellular side of the membrane. Residues 470-490 (LIILNDYINCSQGIIIFVATF) form a helical membrane-spanning segment. The Cytoplasmic segment spans residues 491-532 (CNHEMFRLIRKRIQNRNITSLELTNTSRPVESEKMADVELGK).

Belongs to the G-protein coupled receptor 2 family. Mth subfamily.

The protein localises to the cell membrane. This is Probable G-protein coupled receptor Mth-like 11 (mthl11) from Drosophila melanogaster (Fruit fly).